The primary structure comprises 590 residues: Arginine--tRNA ligase (590 aa).

The 'HIGH' region motif lies at 138-148 (ANPTGPLHIGH).

This sequence belongs to the class-I aminoacyl-tRNA synthetase family. As to quaternary structure, monomer.

It is found in the cytoplasm. The catalysed reaction is tRNA(Arg) + L-arginine + ATP = L-arginyl-tRNA(Arg) + AMP + diphosphate. The polypeptide is Arginine--tRNA ligase (Orientia tsutsugamushi (strain Boryong) (Rickettsia tsutsugamushi)).